A 2455-amino-acid polypeptide reads, in one-letter code: Ectopic P granules protein 5 homolog (2455 aa).

Residues Met1–Asn42 form a disordered region. A Phosphoserine modification is found at Ser44. Residues Val77–Thr105 form a disordered region. The span at Gln80–Ala97 shows a compositional bias: low complexity. Ser467 carries the post-translational modification Phosphoserine.

Belongs to the EPG5 family.

It localises to the cytoplasm. Its subcellular location is the perinuclear region. The protein resides in the lysosome. In terms of biological role, involved in autophagy. Plays a role in late steps of autophagy. This Drosophila melanogaster (Fruit fly) protein is Ectopic P granules protein 5 homolog.